Here is a 561-residue protein sequence, read N- to C-terminus: Asparagine synthetase [glutamine-hydrolyzing] (561 aa).

The For GATase activity role is filled by cysteine 2. The region spanning 2 to 191 (CGIWALFGSD…PGHYEVLDLK (190 aa)) is the Glutamine amidotransferase type-2 domain. Residues 49–53 (RLAVV), 75–77 (NGE), and aspartate 97 contribute to the L-glutamine site. In terms of domain architecture, Asparagine synthetase spans 213–536 (HALYDSVEKL…PGRADWLTHY (324 aa)). ATP is bound by residues leucine 256, isoleucine 288, and 363 to 364 (SG). Position 385 is an N6-acetyllysine (lysine 385). A Phosphothreonine modification is found at threonine 545. Serine 557 bears the Phosphoserine mark.

It carries out the reaction L-aspartate + L-glutamine + ATP + H2O = L-asparagine + L-glutamate + AMP + diphosphate + H(+). Its pathway is amino-acid biosynthesis; L-asparagine biosynthesis; L-asparagine from L-aspartate (L-Gln route): step 1/1. The protein is Asparagine synthetase [glutamine-hydrolyzing] (ASNS) of Cricetulus griseus (Chinese hamster).